The sequence spans 860 residues: Leucine--tRNA ligase (860 aa).

Positions 42–52 (PYPSGRLHMGH) match the 'HIGH' region motif. Residues 619–623 (KMSKS) carry the 'KMSKS' region motif. Lys622 contributes to the ATP binding site.

This sequence belongs to the class-I aminoacyl-tRNA synthetase family.

The protein resides in the cytoplasm. The enzyme catalyses tRNA(Leu) + L-leucine + ATP = L-leucyl-tRNA(Leu) + AMP + diphosphate. The chain is Leucine--tRNA ligase from Escherichia coli (strain K12 / MC4100 / BW2952).